We begin with the raw amino-acid sequence, 637 residues long: Clathrin coat assembly protein AP180A (637 aa).

The ENTH domain occupies 1-126; sequence MTTYFKLVKG…REFGKIKKDY (126 aa). The interval 555–637 is disordered; that stretch reads TQNHLQQQQQ…YANNLNLIDM (83 aa). Composition is skewed to low complexity over residues 560 to 579 and 600 to 622; these read QQQQ…QPQQ and QPQN…TQQP. The interval 587 to 637 is clathrin-binding; it reads AGANPVTNITGTVQPQNFPFYPQQQPQPEQSQTQQPVLGNQYANNLNLIDM. Residues 623 to 637 are compositionally biased toward polar residues; that stretch reads VLGNQYANNLNLIDM.

The protein belongs to the AP180 family. As to quaternary structure, interacts with PAN1 and the clathrin heavy and light chains CHC1 and CLC1.

It is found in the bud. It localises to the bud neck. The protein resides in the cell membrane. The protein localises to the cytoplasm. Its function is as follows. Involved in endocytosis and clathrin cage assembly. The polypeptide is Clathrin coat assembly protein AP180A (YAP1801) (Saccharomyces cerevisiae (strain ATCC 204508 / S288c) (Baker's yeast)).